Reading from the N-terminus, the 304-residue chain is Ribonuclease Z (304 aa).

7 residues coordinate Zn(2+): His-63, His-65, Asp-67, His-68, His-143, Asp-213, and His-271. The Proton acceptor role is filled by Asp-67.

This sequence belongs to the RNase Z family. Homodimer. The cofactor is Zn(2+).

The enzyme catalyses Endonucleolytic cleavage of RNA, removing extra 3' nucleotides from tRNA precursor, generating 3' termini of tRNAs. A 3'-hydroxy group is left at the tRNA terminus and a 5'-phosphoryl group is left at the trailer molecule.. Functionally, zinc phosphodiesterase, which displays some tRNA 3'-processing endonuclease activity. Probably involved in tRNA maturation, by removing a 3'-trailer from precursor tRNA. The sequence is that of Ribonuclease Z from Bacteroides fragilis (strain ATCC 25285 / DSM 2151 / CCUG 4856 / JCM 11019 / LMG 10263 / NCTC 9343 / Onslow / VPI 2553 / EN-2).